A 78-amino-acid chain; its full sequence is Large ribosomal subunit protein bL28 (78 aa).

Residues 1-21 (MSRVCQVTGKKPMVGNNRSHA) form a disordered region.

This sequence belongs to the bacterial ribosomal protein bL28 family.

This Shewanella loihica (strain ATCC BAA-1088 / PV-4) protein is Large ribosomal subunit protein bL28.